The primary structure comprises 465 residues: UDP-N-acetylmuramoylalanine--D-glutamate ligase (465 aa).

115 to 121 (GTDGKTT) provides a ligand contact to ATP.

This sequence belongs to the MurCDEF family.

The protein localises to the cytoplasm. It catalyses the reaction UDP-N-acetyl-alpha-D-muramoyl-L-alanine + D-glutamate + ATP = UDP-N-acetyl-alpha-D-muramoyl-L-alanyl-D-glutamate + ADP + phosphate + H(+). The protein operates within cell wall biogenesis; peptidoglycan biosynthesis. Functionally, cell wall formation. Catalyzes the addition of glutamate to the nucleotide precursor UDP-N-acetylmuramoyl-L-alanine (UMA). This chain is UDP-N-acetylmuramoylalanine--D-glutamate ligase, found in Chlorobaculum tepidum (strain ATCC 49652 / DSM 12025 / NBRC 103806 / TLS) (Chlorobium tepidum).